We begin with the raw amino-acid sequence, 365 residues long: Sesquiterpene synthase 3 (365 aa).

Residues Asp117, Asn253, Ser257, and Glu261 each contribute to the Mg(2+) site. Positions 117 to 121 (DDWSD) match the DDXXD motif motif. Residues 253 to 261 (NDILSYNRE) carry the NSE/DTE motif motif. (2E,6E)-farnesyl diphosphate-binding residues include Arg341 and Tyr342.

The protein belongs to the terpene synthase family. Mg(2+) is required as a cofactor.

It catalyses the reaction (2E,6E)-farnesyl diphosphate = delta-cadinene + diphosphate. Functionally, terpene cyclase that catalyzes the cyclization of farnesyl diphosphate (FPP) to various sesquiterpenes, including beta-elemene gamma-cadinene, delta-cadinene, and alpha-cadinene. This chain is Sesquiterpene synthase 3, found in Postia placenta (strain ATCC 44394 / Madison 698-R) (Brown rot fungus).